The sequence spans 1724 residues: Sperm flagellar protein 2 (1724 aa).

Residues 1–105 (MSEILCQWLN…LLYQLYIALQ (105 aa)) enclose the Calponin-homology (CH) domain. 2 coiled-coil regions span residues 170 to 203 (KAIEAQKLMKKKKEAEDVANEIKKFEALIKKDLQ) and 255 to 351 (RRLL…REKE). Residues 545-576 (HERQKSGKTPPTQEDDKRDPVVNQEKVSKTQD) are disordered. Basic and acidic residues predominate over residues 558-576 (EDDKRDPVVNQEKVSKTQD). Residues 665–691 (NQAKLLEEALTGYKRKFLQLKKKKEQM) adopt a coiled-coil conformation. Residues 828–910 (EEKETEKKAG…PTAPPPPKAG (83 aa)) form a disordered region. Residues 853–862 (EAEKDKELHQ) are compositionally biased toward basic and acidic residues. Residues 995 to 1021 (EDLWEDEETKAELHQRVNDLRDRLWDI) adopt a coiled-coil conformation. The segment covering 1177–1194 (RLTEEEKEPPQLDSKEKS) has biased composition (basic and acidic residues). Disordered regions lie at residues 1177–1241 (RLTE…EMAE), 1580–1618 (VSPIEEFPETEESSAKEDRELKEEKDDQKEEEIPENANT), and 1704–1724 (SEHAQGSDGERSPSRLTDEKK). A compositionally biased stretch (basic residues) spans 1210–1221 (PKKKKTDKKGKG). The interaction with IFT20 stretch occupies residues 1228–1580 (EVSPVTVTPE…MAEKTSISTV (353 aa)). Basic and acidic residues predominate over residues 1592–1607 (SSAKEDRELKEEKDDQ).

As to quaternary structure, interacts (via C-terminus) with IFT20. Interacts with DYNC1I2. In terms of tissue distribution, highly expressed in testis, where it primarily localizes to late spermatocytes, round spermatids and elongating spermatids (at protein level). Found in Sertoli cells of the testis (at protein level). Expressed at lower levels in epididymis (at protein level). Detected in lung, brain, liver and kidney. Also detected in bone, cartilage, trachea, pituitary gland and eye. Expressed in osteoblasts and chondrocytes.

It localises to the cell projection. Its subcellular location is the cilium. The protein resides in the flagellum. The protein localises to the cytoplasm. It is found in the cytoskeleton. It localises to the golgi apparatus. In terms of biological role, required for correct axoneme development in spermatozoa. Important for normal development of the manchette and sperm head morphology. Essential for male fertility. Plays a role in localization of the intraflagellar transport protein IFT20 to the manchette, suggesting function as an adapter for dynein-mediated protein transport during spermatogenesis. Also plays a role in bone growth where it seems to be required for normal osteoblast differentiation. This is Sperm flagellar protein 2 (Spef2) from Mus musculus (Mouse).